Consider the following 78-residue polypeptide: Large ribosomal subunit protein bL28 (78 aa).

This sequence belongs to the bacterial ribosomal protein bL28 family.

This is Large ribosomal subunit protein bL28 from Francisella philomiragia subsp. philomiragia (strain ATCC 25017 / CCUG 19701 / FSC 153 / O#319-036).